The sequence spans 356 residues: MRVADFSFELPEALIAHYPQPQRSGCRLLSLDGPTGTLTHGIFTDLLDKLAPGDLLVFNNTRVIPARLFGRKASGGKLEVLVERVLDDHRVLAHVKASKAPKPGAELLLGDDENIRATMLARHDTLFELRFDDERDVFTILNAVGHMPLPPYIDRPDEDADRELYQTVYSQRPGAVAAPTAGLHFDEPMLATLQEKGIEMAFVTLHVGAGTFQPVRVDTIEDHIMHSEYAEVPQEVVDAVLACKARGKRVVAVGTTSVRSLESAAKAAENGLIAPFFGDTRIFIYPGYHYQVVDALVTNFHLPESTLIMLVSAFAGYKNTMNAYQQAVAEQYRFFSYGDAMFISRNPRAPQEKVSP.

It belongs to the QueA family. In terms of assembly, monomer.

The protein resides in the cytoplasm. The catalysed reaction is 7-aminomethyl-7-carbaguanosine(34) in tRNA + S-adenosyl-L-methionine = epoxyqueuosine(34) in tRNA + adenine + L-methionine + 2 H(+). It functions in the pathway tRNA modification; tRNA-queuosine biosynthesis. In terms of biological role, transfers and isomerizes the ribose moiety from AdoMet to the 7-aminomethyl group of 7-deazaguanine (preQ1-tRNA) to give epoxyqueuosine (oQ-tRNA). The protein is S-adenosylmethionine:tRNA ribosyltransferase-isomerase of Yersinia pseudotuberculosis serotype O:3 (strain YPIII).